We begin with the raw amino-acid sequence, 160 residues long: Transcription antitermination protein NusB (160 aa).

This sequence belongs to the NusB family.

Involved in transcription antitermination. Required for transcription of ribosomal RNA (rRNA) genes. Binds specifically to the boxA antiterminator sequence of the ribosomal RNA (rrn) operons. The polypeptide is Transcription antitermination protein NusB (Rhizobium etli (strain ATCC 51251 / DSM 11541 / JCM 21823 / NBRC 15573 / CFN 42)).